Reading from the N-terminus, the 123-residue chain is UPF0102 protein MCA0184 (123 aa).

This sequence belongs to the UPF0102 family.

The chain is UPF0102 protein MCA0184 from Methylococcus capsulatus (strain ATCC 33009 / NCIMB 11132 / Bath).